A 203-amino-acid chain; its full sequence is uncharacterized protein (203 aa).

A helical membrane pass occupies residues 171-191 (VGYLSIWLKEYWYLVVLFVLI).

The protein resides in the membrane. This is an uncharacterized protein from Methanocaldococcus jannaschii (strain ATCC 43067 / DSM 2661 / JAL-1 / JCM 10045 / NBRC 100440) (Methanococcus jannaschii).